We begin with the raw amino-acid sequence, 188 residues long: Insulin-like growth factor 1 (188 aa).

Positions 45–73 (GPETLCGAELVDTLQFVCGERGFYFSKPT) are b. 3 disulfide bridges follow: cysteine 50-cysteine 92, cysteine 62-cysteine 105, and cysteine 91-cysteine 96. The c stretch occupies residues 74–85 (GYGPSSRRSHNR). Residues 86-106 (GIVDECCFQSCELRRLEMYCA) form an a region. The tract at residues 107–114 (PVKSGKAA) is d. Positions 115 to 188 (RSVRAQRHTD…GNTGGRNYRM (74 aa)) are cleaved as a propeptide — e peptide. Positions 115–188 (RSVRAQRHTD…GNTGGRNYRM (74 aa)) are disordered. Positions 140-153 (RGTERRTAQHPDKT) are enriched in basic and acidic residues.

The protein belongs to the insulin family. As to expression, all the isoforms are expressed in embryos, juvenile and adult liver, muscle and brain. At least one isoform is expressed in heart, kidney, testes, ovary, adipose tissue and spleen of juvenile salmon.

The protein localises to the secreted. Its function is as follows. The insulin-like growth factors, isolated from plasma, are structurally and functionally related to insulin but have a much higher growth-promoting activity. Acts as a ligand for IGF1R. Binds to the alpha subunit of IGF1R, leading to the activation of the intrinsic tyrosine kinase activity which autophosphorylates tyrosine residues in the beta subunit thus initiatiating a cascade of down-stream signaling events leading to activation of the PI3K-AKT/PKB and the Ras-MAPK pathways. Binds to integrins. Its binding to integrins and subsequent ternary complex formation with integrins and IGFR1 are essential for IGF1 signaling. The chain is Insulin-like growth factor 1 from Oncorhynchus kisutch (Coho salmon).